Consider the following 201-residue polypeptide: Protein S40-5 (201 aa).

Disordered regions lie at residues 1-39 (MARG…LTEE) and 134-178 (SIHE…EGVG). The span at 17 to 29 (GSSYSYGDSNGNS) shows a compositional bias: low complexity.

The protein belongs to the senescence regulator S40 family.

The protein localises to the cytoplasm. The chain is Protein S40-5 from Arabidopsis thaliana (Mouse-ear cress).